A 469-amino-acid chain; its full sequence is Cysteine--tRNA ligase (469 aa).

Position 29 (Cys-29) interacts with Zn(2+). Positions Pro-31–Asn-41 match the 'HIGH' region motif. Zn(2+) contacts are provided by Cys-210, His-235, and Glu-239. Positions Lys-267–Ser-271 match the 'KMSKS' region motif. Lys-270 lines the ATP pocket.

The protein belongs to the class-I aminoacyl-tRNA synthetase family. Monomer. Zn(2+) serves as cofactor.

The protein resides in the cytoplasm. It carries out the reaction tRNA(Cys) + L-cysteine + ATP = L-cysteinyl-tRNA(Cys) + AMP + diphosphate. The chain is Cysteine--tRNA ligase from Thermosipho africanus (strain TCF52B).